The chain runs to 314 residues: GDP-L-fucose synthase (314 aa).

Residues 15-21 (GHKGMVG) and 109-112 (LGSS) each bind NADP(+). Tyr140 functions as the Proton donor/acceptor in the catalytic mechanism. NADP(+)-binding positions include Lys144, 167-170 (PTNL), and His183. Lys191, Trp206, Arg213, and Asp273 together coordinate substrate.

It belongs to the NAD(P)-dependent epimerase/dehydratase family. Fucose synthase subfamily.

The enzyme catalyses GDP-beta-L-fucose + NADP(+) = GDP-4-dehydro-alpha-D-rhamnose + NADPH + H(+). It functions in the pathway nucleotide-sugar biosynthesis; GDP-L-fucose biosynthesis via de novo pathway; GDP-L-fucose from GDP-alpha-D-mannose: step 2/2. In terms of biological role, catalyzes the two-step NADP-dependent conversion of GDP-4-dehydro-6-deoxy-D-mannose to GDP-fucose, involving an epimerase and a reductase reaction. This Sinorhizobium fredii (strain NBRC 101917 / NGR234) protein is GDP-L-fucose synthase.